The chain runs to 418 residues: Putative ion-transport protein YfeO (418 aa).

Helical transmembrane passes span 9–31 (MLLL…IMVM), 55–77 (SPLW…IRFS), 90–112 (LIGA…LGLA), 122–140 (PIIT…RLLP), 147–169 (WTIL…AALI), 189–211 (PLMA…FSLP), 223–244 (ILSG…VWCL), 259–281 (FVLG…VSLF), 301–323 (YFLL…FRGG), 343–363 (VPAV…VLVV), and 376–398 (VVVP…WLLL).

It belongs to the chloride channel (TC 2.A.49) family.

It localises to the cell membrane. The protein is Putative ion-transport protein YfeO (yfeO) of Escherichia coli O6:H1 (strain CFT073 / ATCC 700928 / UPEC).